A 579-amino-acid polypeptide reads, in one-letter code: Acyl-coenzyme A synthetase ACSM5, mitochondrial (579 aa).

The N-terminal 26 residues, 1 to 26 (MRPWLRHLVLQALRNSRAFCGSHGKP), are a transit peptide targeting the mitochondrion. Lys-97 carries the post-translational modification N6-acetyllysine; alternate. N6-succinyllysine; alternate is present on Lys-97. N6-acetyllysine is present on Lys-152. An ATP-binding site is contributed by 230–238 (TSGTTGAPK). At Lys-303 the chain carries N6-acetyllysine; alternate. The residue at position 303 (Lys-303) is an N6-succinyllysine; alternate. ATP is bound by residues 368–373 (EGYGQS), Asp-455, Arg-470, and Lys-566.

It belongs to the ATP-dependent AMP-binding enzyme family. It depends on Mg(2+) as a cofactor. Mn(2+) is required as a cofactor. In terms of tissue distribution, detected in kidney and liver.

It localises to the mitochondrion matrix. It carries out the reaction a medium-chain fatty acid + ATP + CoA = a medium-chain fatty acyl-CoA + AMP + diphosphate. Catalyzes the activation of fatty acids by CoA to produce an acyl-CoA, the first step in fatty acid metabolism. The polypeptide is Acyl-coenzyme A synthetase ACSM5, mitochondrial (ACSM5) (Homo sapiens (Human)).